A 306-amino-acid polypeptide reads, in one-letter code: UDP-3-O-acyl-N-acetylglucosamine deacetylase (306 aa).

Zn(2+) is bound by residues H79, H238, and D242. H265 acts as the Proton donor in catalysis.

The protein belongs to the LpxC family. Zn(2+) is required as a cofactor.

It catalyses the reaction a UDP-3-O-[(3R)-3-hydroxyacyl]-N-acetyl-alpha-D-glucosamine + H2O = a UDP-3-O-[(3R)-3-hydroxyacyl]-alpha-D-glucosamine + acetate. Its pathway is glycolipid biosynthesis; lipid IV(A) biosynthesis; lipid IV(A) from (3R)-3-hydroxytetradecanoyl-[acyl-carrier-protein] and UDP-N-acetyl-alpha-D-glucosamine: step 2/6. Its function is as follows. Catalyzes the hydrolysis of UDP-3-O-myristoyl-N-acetylglucosamine to form UDP-3-O-myristoylglucosamine and acetate, the committed step in lipid A biosynthesis. The chain is UDP-3-O-acyl-N-acetylglucosamine deacetylase from Shewanella violacea (strain JCM 10179 / CIP 106290 / LMG 19151 / DSS12).